The primary structure comprises 197 residues: RNA pyrophosphohydrolase (197 aa).

The 149-residue stretch at Gly6–Ser154 folds into the Nudix hydrolase domain. Residues Gly38–Gly59 carry the Nudix box motif.

It belongs to the Nudix hydrolase family. RppH subfamily. The cofactor is a divalent metal cation.

Accelerates the degradation of transcripts by removing pyrophosphate from the 5'-end of triphosphorylated RNA, leading to a more labile monophosphorylated state that can stimulate subsequent ribonuclease cleavage. In Polynucleobacter necessarius subsp. necessarius (strain STIR1), this protein is RNA pyrophosphohydrolase.